The following is a 625-amino-acid chain: MTLLYQMVHFALFASVAGECVTTLFQDACFKGGDITVAFAPNAKHCQIICTHHPRCLLFTFMTESSSEDPTKWYTCILKDSVTETLPMVNMTGAISGYSSKQCLHHISACSKDMYVDLNMKGMNYNSSLAQSARECQQRCTDDTHCHFFTFATRHFPSIKDRNTCLLKNTQTGTPTSITKLHEVVSGFSLKSCGLSNLACIRDIFPRTAFVDITIDTVMAPDPFVCRSICTHHPSCLFFTFLSEEWPTASERNLCLLKTSSSGLPSARFRKNRAFSGFSLQHCQHSVPVFCHSSFYRNTDFLGEELDIVDADSHEACQKTCTNSIRCQFFTYSPSQESCNGGKGKCYLKLSANGSPTKILHGTGSISGYTLRLCKMDNVCTTKIKTRIVGGTQSVHGEWPWQITLHVTSPTQRHLCGGAIIGNQWILTAAHCFNEVKSPNVLRVYSGILNQSEIKEDTSFFGVQEIIIHDQYEKAESGYDIALLKLETAMNYTDSQWPICLPSKGDRNVMYTECWVTGWGYRKLRDKIQNTLQKAKVPLMTNEECQAGYREHRITSKMVCAGYREGGKDACKGDSGGPLSCKHNEVWHLVGITSWGEGCGQRERPGVYSNVVEYVDWILEKTQGP.

Residues 1–18 (MTLLYQMVHFALFASVAG) form the signal peptide. 4 Apple domains span residues 20 to 103 (CVTT…SKQC), 110 to 193 (CSKD…LKSC), 200 to 283 (CIRD…LQHC), and 291 to 374 (CHSS…LRLC). Cystine bridges form between Cys20/Cys103, Cys46/Cys76, Cys50/Cys56, Cys110/Cys193, Cys136/Cys165, Cys140/Cys146, Cys200/Cys283, Cys226/Cys255, Cys230/Cys236, Cys291/Cys374, Cys317/Cys346, Cys321/Cys327, Cys380/Cys500, Cys416/Cys432, Cys514/Cys581, Cys545/Cys560, and Cys571/Cys599. N-linked (GlcNAc...) asparagine glycans are attached at residues Asn90 and Asn126. In terms of domain architecture, Peptidase S1 spans 388 to 623 (IVGGTQSVHG…YVDWILEKTQ (236 aa)). The active-site Charge relay system is the His431. The N-linked (GlcNAc...) asparagine glycan is linked to Asn450. Asp480 functions as the Charge relay system in the catalytic mechanism. N-linked (GlcNAc...) asparagine glycosylation is present at Asn491. 547 to 550 (AGYR) provides a ligand contact to heparin. Ser575 functions as the Charge relay system in the catalytic mechanism.

This sequence belongs to the peptidase S1 family. Plasma kallikrein subfamily. Homodimer; disulfide-linked. After activation the heavy and light chains are also linked by a disulfide bond. Interacts (activated) with F9 (inactive and activated) in calcium-dependent manner. Forms a heterodimer with SERPINA5. Post-translationally, activated by factor XIIa (or XII), which cleaves each polypeptide after Arg-387 into the light chain, which contains the active site, and the heavy chain, which associates with high molecular weight (HMW) kininogen. Activated by F12 (activated); the presence of negatively charged surfaces accelerates activation. Activated by F2 (thrombin); the presence of negatively charged surfaces, such as polyphosphate and dextran sulfate, strongly accelerates activation. Autoactivated; the presence of negatively charged surfaces, such as polyphosphate and dextran sulfate, accelerates autoactivation and autolysis. N-glycosylated on both chains. N-glycosylated sites mainly consist of nonfucosylated sialylated biantennary (in high abundance) and/or triantennary (in low abundance) complex structures.

It localises to the secreted. It carries out the reaction Selective cleavage of Arg-|-Ala and Arg-|-Val bonds in factor IX to form factor IXa.. With respect to regulation, inhibited by SERPINA5. Functionally, factor XI triggers the middle phase of the intrinsic pathway of blood coagulation by activating factor IX. The polypeptide is Coagulation factor XI (F11) (Bos taurus (Bovine)).